The sequence spans 103 residues: Large ribosomal subunit protein mL63 (103 aa).

It belongs to the mitochondrion-specific ribosomal protein mL63 family.

It is found in the mitochondrion. The polypeptide is Large ribosomal subunit protein mL63 (mrpl57) (Danio rerio (Zebrafish)).